An 89-amino-acid polypeptide reads, in one-letter code: Small ribosomal subunit protein uS14 (89 aa).

Belongs to the universal ribosomal protein uS14 family. As to quaternary structure, part of the 30S ribosomal subunit. Contacts proteins S3 and S10.

Binds 16S rRNA, required for the assembly of 30S particles and may also be responsible for determining the conformation of the 16S rRNA at the A site. The polypeptide is Small ribosomal subunit protein uS14 (Chlorobium luteolum (strain DSM 273 / BCRC 81028 / 2530) (Pelodictyon luteolum)).